A 313-amino-acid chain; its full sequence is Homoserine O-succinyltransferase (313 aa).

Cys-142 serves as the catalytic Acyl-thioester intermediate. The substrate site is built by Lys-163 and Ser-192. His-235 (proton acceptor) is an active-site residue. The active site involves Glu-237. Position 249 (Arg-249) interacts with substrate.

This sequence belongs to the MetA family.

It localises to the cytoplasm. It catalyses the reaction L-homoserine + succinyl-CoA = O-succinyl-L-homoserine + CoA. It participates in amino-acid biosynthesis; L-methionine biosynthesis via de novo pathway; O-succinyl-L-homoserine from L-homoserine: step 1/1. In terms of biological role, transfers a succinyl group from succinyl-CoA to L-homoserine, forming succinyl-L-homoserine. The polypeptide is Homoserine O-succinyltransferase (Shewanella baltica (strain OS195)).